The primary structure comprises 116 residues: Peptidyl-tRNA hydrolase (116 aa).

This sequence belongs to the PTH2 family.

Its subcellular location is the cytoplasm. It catalyses the reaction an N-acyl-L-alpha-aminoacyl-tRNA + H2O = an N-acyl-L-amino acid + a tRNA + H(+). The natural substrate for this enzyme may be peptidyl-tRNAs which drop off the ribosome during protein synthesis. The chain is Peptidyl-tRNA hydrolase (pth) from Methanococcus maripaludis (strain DSM 14266 / JCM 13030 / NBRC 101832 / S2 / LL).